A 430-amino-acid chain; its full sequence is Histidine--tRNA ligase (430 aa).

This sequence belongs to the class-II aminoacyl-tRNA synthetase family. As to quaternary structure, homodimer.

Its subcellular location is the cytoplasm. It carries out the reaction tRNA(His) + L-histidine + ATP = L-histidyl-tRNA(His) + AMP + diphosphate + H(+). This Synechococcus sp. (strain CC9902) protein is Histidine--tRNA ligase.